Consider the following 275-residue polypeptide: NH(3)-dependent NAD(+) synthetase (275 aa).

46-53 (GISGGQDS) is a binding site for ATP. D52 contacts Mg(2+). R140 contacts deamido-NAD(+). T160 contributes to the ATP binding site. E165 lines the Mg(2+) pocket. Deamido-NAD(+)-binding residues include K173 and D180. 2 residues coordinate ATP: K189 and T211. 260–261 (HK) provides a ligand contact to deamido-NAD(+).

The protein belongs to the NAD synthetase family. Homodimer.

The enzyme catalyses deamido-NAD(+) + NH4(+) + ATP = AMP + diphosphate + NAD(+) + H(+). It functions in the pathway cofactor biosynthesis; NAD(+) biosynthesis; NAD(+) from deamido-NAD(+) (ammonia route): step 1/1. Catalyzes the ATP-dependent amidation of deamido-NAD to form NAD. Uses ammonia as a nitrogen source. This is NH(3)-dependent NAD(+) synthetase from Salmonella typhi.